A 71-amino-acid polypeptide reads, in one-letter code: Conotoxin Ca5.1 (71 aa).

The signal sequence occupies residues 1–19 (MRCVPVFIILLLLASPAAS). Residues 20–56 (DPLEKRIQSDLIRAALEDADTKNDPRILEDIVSTALA) constitute a propeptide that is removed on maturation.

This sequence belongs to the conotoxin T superfamily. Contains 2 disulfide bonds that can be either 'C1-C3, C2-C4' or 'C1-C4, C2-C3', since these disulfide connectivities have been observed for conotoxins with cysteine framework V (for examples, see AC P0DQQ7 and AC P81755). As to expression, expressed by the venom duct.

It is found in the secreted. The polypeptide is Conotoxin Ca5.1 (Conus caracteristicus (Characteristic cone)).